Reading from the N-terminus, the 921-residue chain is Valine--tRNA ligase (921 aa).

The short motif at 40–50 (PNVTGSLHMGH) is the 'HIGH' region element. The 'KMSKS' region motif lies at 522-526 (KMSKS). Residue Lys-525 coordinates ATP. Positions 849–921 (MADLIDKEAE…LQHKNRIESL (73 aa)) form a coiled coil.

This sequence belongs to the class-I aminoacyl-tRNA synthetase family. ValS type 1 subfamily. Monomer.

It localises to the cytoplasm. The enzyme catalyses tRNA(Val) + L-valine + ATP = L-valyl-tRNA(Val) + AMP + diphosphate. Its function is as follows. Catalyzes the attachment of valine to tRNA(Val). As ValRS can inadvertently accommodate and process structurally similar amino acids such as threonine, to avoid such errors, it has a 'posttransfer' editing activity that hydrolyzes mischarged Thr-tRNA(Val) in a tRNA-dependent manner. This Legionella pneumophila (strain Paris) protein is Valine--tRNA ligase.